Reading from the N-terminus, the 942-residue chain is UvrABC system protein A (942 aa).

31–38 (GLSGSGKS) serves as a coordination point for ATP. Residues 253–280 (CSECGYSLPELEPRLFSFNNPAGACPTC) form a C4-type zinc finger. 2 ABC transporter domains span residues 310–586 (WDRR…EASI) and 606–936 (YDAN…RFLT). 639 to 646 (GVSGSGKS) contacts ATP. The segment at 739–765 (CEACQGDGVIKVEMHFLPDVYVPCDHC) adopts a C4-type zinc-finger fold.

Belongs to the ABC transporter superfamily. UvrA family. Forms a heterotetramer with UvrB during the search for lesions.

The protein localises to the cytoplasm. The UvrABC repair system catalyzes the recognition and processing of DNA lesions. UvrA is an ATPase and a DNA-binding protein. A damage recognition complex composed of 2 UvrA and 2 UvrB subunits scans DNA for abnormalities. When the presence of a lesion has been verified by UvrB, the UvrA molecules dissociate. This Haemophilus ducreyi (strain 35000HP / ATCC 700724) protein is UvrABC system protein A.